Consider the following 363-residue polypeptide: Ribosome-binding ATPase YchF (363 aa).

The 254-residue stretch at F3–L256 folds into the OBG-type G domain. Residue N12–T17 participates in ATP binding. Mg(2+) is bound by residues S16 and T36. Positions N278–F361 constitute a TGS domain.

This sequence belongs to the TRAFAC class OBG-HflX-like GTPase superfamily. OBG GTPase family. YchF/OLA1 subfamily. The cofactor is Mg(2+).

Its function is as follows. ATPase that binds to both the 70S ribosome and the 50S ribosomal subunit in a nucleotide-independent manner. The polypeptide is Ribosome-binding ATPase YchF (Pasteurella multocida (strain Pm70)).